The chain runs to 644 residues: MGIQILPPQLANQIAAGEVVERPASVVKELVENSLDAGATRIDIEIDKGGSKLIKIRDNGSGIPKDELALALSRHATSKLHSLDDLEAILSFGFRGEALASISSVSRLTLTSRTAEQTEAWQAYAEGVDMAVKVMPAAHPVGSTIEVVDLFFNTPARRRFLKSDKTEFTHIDEWLKRIALVRGDIHFTLTHNGKTVRNYRPAMNEPQYLQRLTQVAGRQFADEALRVECQHDDLRLSGYLQSPWSTVLTDTHYFYVNGRLVRDRLVNHAVRQAFAQKAEVEQPGYVLMLDIDPHQVDVNVHPAKHEVRFHQSRYVHDYILQALQSALEEAGELGFERPFEPSSPQVRDEVSLSESGAQTQTEHHAFELQSPESKTHSTWDEASRVDTSRAEISRDSSLGERTRDIASTRPYAGVQSNAYGSMAVPRESRSGSTGESRARAELPSKVAIASYGELLQTPSYNVQDKPYQPVLAMPAILNGQYWVLAQEQNLSLLPIQSVALATRSHEIETKLATGLIGQPLLMPVSIAADTDWPALLEEHETLIRQLGLELTIRYQQLIIKKVPPYLRDSQLAKVIPEWLQSLRFEAPAPNALAVWLAEQSLTGFTSAADIWAAYCQLTEEKRQQIADKAVSLPWQSWLEEQAIE.

Residues 336-400 (ERPFEPSSPQ…EISRDSSLGE (65 aa)) form a disordered region. The segment covering 373–400 (SKTHSTWDEASRVDTSRAEISRDSSLGE) has biased composition (basic and acidic residues).

This sequence belongs to the DNA mismatch repair MutL/HexB family.

Functionally, this protein is involved in the repair of mismatches in DNA. It is required for dam-dependent methyl-directed DNA mismatch repair. May act as a 'molecular matchmaker', a protein that promotes the formation of a stable complex between two or more DNA-binding proteins in an ATP-dependent manner without itself being part of a final effector complex. This is DNA mismatch repair protein MutL from Shewanella sp. (strain MR-7).